Reading from the N-terminus, the 407-residue chain is DNA primase DnaG (407 aa).

Positions 172 to 248 (DWIIVVEGRA…HIDYVARAPP (77 aa)) constitute a Toprim domain. Residues E178, D222, and D224 each coordinate Mg(2+). A disordered region spans residues 279 to 304 (AGAEKTEAAAPPPQQPTAPPAAPSQQ). Positions 288 to 300 (APPPQQPTAPPAA) are enriched in pro residues.

The protein belongs to the archaeal DnaG primase family. In terms of assembly, forms a ternary complex with MCM helicase and DNA. Component of the archaeal exosome complex. Mg(2+) serves as cofactor.

It catalyses the reaction ssDNA + n NTP = ssDNA/pppN(pN)n-1 hybrid + (n-1) diphosphate.. Functionally, RNA polymerase that catalyzes the synthesis of short RNA molecules used as primers for DNA polymerase during DNA replication. Also part of the exosome, which is a complex involved in RNA degradation. Acts as a poly(A)-binding protein that enhances the interaction between heteromeric, adenine-rich transcripts and the exosome. The sequence is that of DNA primase DnaG from Pyrobaculum calidifontis (strain DSM 21063 / JCM 11548 / VA1).